We begin with the raw amino-acid sequence, 391 residues long: Chaperone protein DnaJ (391 aa).

In terms of domain architecture, J spans 6-71 (CYYEVLKVER…NKRARYDQYG (66 aa)). Residues 137 to 215 (GCHKDIVFRR…CRGTGTQNEK (79 aa)) form a CR-type zinc finger. Zn(2+)-binding residues include cysteine 150, cysteine 153, cysteine 167, cysteine 170, cysteine 189, cysteine 192, cysteine 203, and cysteine 206. CXXCXGXG motif repeat units lie at residues 150–157 (CDTCDGSG), 167–174 (CTMCGGQG), 189–196 (CPTCKGAG), and 203–210 (CGKCRGTG). The disordered stretch occupies residues 372–391 (FFDPEPEEAGTGSTDTEKDS).

Belongs to the DnaJ family. As to quaternary structure, homodimer. It depends on Zn(2+) as a cofactor.

It is found in the cytoplasm. Functionally, participates actively in the response to hyperosmotic and heat shock by preventing the aggregation of stress-denatured proteins and by disaggregating proteins, also in an autonomous, DnaK-independent fashion. Unfolded proteins bind initially to DnaJ; upon interaction with the DnaJ-bound protein, DnaK hydrolyzes its bound ATP, resulting in the formation of a stable complex. GrpE releases ADP from DnaK; ATP binding to DnaK triggers the release of the substrate protein, thus completing the reaction cycle. Several rounds of ATP-dependent interactions between DnaJ, DnaK and GrpE are required for fully efficient folding. Also involved, together with DnaK and GrpE, in the DNA replication of plasmids through activation of initiation proteins. This is Chaperone protein DnaJ from Rhodopirellula baltica (strain DSM 10527 / NCIMB 13988 / SH1).